A 162-amino-acid chain; its full sequence is Peptidyl-prolyl cis-trans isomerase-like 1 (162 aa).

One can recognise a PPIase cyclophilin-type domain in the interval 1-155 (MATDVAFDTS…DGVKILRARI (155 aa)).

Belongs to the cyclophilin-type PPIase family. PPIL1 subfamily.

The catalysed reaction is [protein]-peptidylproline (omega=180) = [protein]-peptidylproline (omega=0). Its function is as follows. PPIases accelerate the folding of proteins. It catalyzes the cis-trans isomerization of proline imidic peptide bonds in oligopeptides. In Aspergillus niger, this protein is Peptidyl-prolyl cis-trans isomerase-like 1 (cypC).